A 275-amino-acid polypeptide reads, in one-letter code: NH(3)-dependent NAD(+) synthetase (275 aa).

ATP is bound at residue 47-54; sequence GISGGQDS. Aspartate 53 contributes to the Mg(2+) binding site. Arginine 141 contacts deamido-NAD(+). Threonine 161 lines the ATP pocket. Glutamate 166 is a binding site for Mg(2+). Deamido-NAD(+)-binding residues include lysine 174 and aspartate 181. ATP-binding residues include lysine 190 and threonine 212. Residue 261-262 coordinates deamido-NAD(+); sequence HK.

This sequence belongs to the NAD synthetase family. Homodimer.

The catalysed reaction is deamido-NAD(+) + NH4(+) + ATP = AMP + diphosphate + NAD(+) + H(+). It participates in cofactor biosynthesis; NAD(+) biosynthesis; NAD(+) from deamido-NAD(+) (ammonia route): step 1/1. Catalyzes the ATP-dependent amidation of deamido-NAD to form NAD. Uses ammonia as a nitrogen source. The chain is NH(3)-dependent NAD(+) synthetase from Lacticaseibacillus casei (strain BL23) (Lactobacillus casei).